Consider the following 119-residue polypeptide: Putative membrane protein insertion efficiency factor (119 aa).

The interval 82 to 119 is disordered; it reads NALRGEKGGESAADVPSGGSVSEPPGPAAETSPNAQGA.

The protein belongs to the UPF0161 family.

It is found in the cell membrane. Its function is as follows. Could be involved in insertion of integral membrane proteins into the membrane. This is Putative membrane protein insertion efficiency factor from Streptomyces griseus subsp. griseus (strain JCM 4626 / CBS 651.72 / NBRC 13350 / KCC S-0626 / ISP 5235).